Reading from the N-terminus, the 720-residue chain is Nucleoporin NUP2 (720 aa).

The interval 1–33 (MAKRVADAQIQRETYDSNESDDDVTPSTKVASS) is disordered. Phosphoserine is present on residues S17 and S20. The segment at 35–50 (VMNRRKIAMPKRRMAF) is interaction with SRP1 NLS binding site 1. 2 disordered regions span residues 52–92 (PFGS…SNSR) and 136–278 (KSIE…VDNN). Residues 67 to 69 (FSF) form an FXF 1 repeat. Residues 81–92 (VDNSPTTESNSR) are compositionally biased toward polar residues. A Phosphoserine modification is found at S137. Residues 147–159 (NDAKPAKVEDVQK) show a composition bias toward basic and acidic residues. S165 bears the Phosphoserine mark. The FXFG 1 repeat unit spans residues 189 to 192 (FSFG). Residues 193–202 (PKKENRKKDE) are compositionally biased toward basic and acidic residues. S203 and S205 each carry phosphoserine. FXF repeat units lie at residues 216–218 (FKF) and 247–249 (FSF). Polar residues predominate over residues 243–278 (NAKPFSFSSATSTTEQTKSKNPLSLTEATKTNVDNN). FXFG repeat units follow at residues 285–288 (FTFG), 302–305 (FVFG), and 318–321 (FTFG). Residues 315–324 (KSSFTFGSTT) are compositionally biased toward polar residues. The tract at residues 315 to 604 (KSSFTFGSTT…KPINLQNGEE (290 aa)) is disordered. Over residues 345-360 (SNDSNPSFSFSIPSKN) the composition is skewed to low complexity. Phosphoserine is present on residues S348 and S351. The FXF 4 repeat unit spans residues 352 to 354 (FSF). A Phosphothreonine modification is found at T361. The FXFG 5 repeat unit spans residues 369 to 372 (FSFG). A compositionally biased stretch (polar residues) spans 373 to 384 (VPNSSKNETSKP). The stretch at 386 to 389 (FSFG) is one FXFG 6 repeat. Over residues 424–435 (TEKEKESKKDSK) the composition is skewed to basic and acidic residues. 5 FXFG repeats span residues 438–441 (FSFG), 474–477 (FSFG), 493–496 (FTFG), 511–514 (FSFG), and 524–527 (FSFG). Over residues 479–495 (NTNTTKTADTKAPTFTF) the composition is skewed to low complexity. Positions 513 to 533 (FGTSQPNNTPSFSFGKTTANL) are enriched in polar residues. The segment covering 534–548 (PANSSTSPAPSIPST) has biased composition (low complexity). The stretch at 550–552 (FKF) is one FXF 5 repeat. Positions 574 to 584 (TEATGNESQDA) are enriched in polar residues. The residue at position 581 (S581) is a Phosphoserine. The RanBD1 domain maps to 583–720 (DATKVDATPE…AIEDAKKEMK (138 aa)). Phosphothreonine is present on T590.

In terms of assembly, component of the nuclear pore complex (NPC). NPC constitutes the exclusive means of nucleocytoplasmic transport. NPCs allow the passive diffusion of ions and small molecules and the active, nuclear transport receptor-mediated bidirectional transport of macromolecules such as proteins, RNAs, ribonucleoparticles (RNPs), and ribosomal subunits across the nuclear envelope. Due to its 8-fold rotational symmetry, all subunits are present with 8 copies or multiples thereof. Binds to the nuclear basket of the NPC through NUP60 in a (GSP1, GSP2) GTPase-GTP-dependent manner. Interacts through its FG repeats with nuclear transport factors. Interacts with KAP122.

The protein resides in the nucleus. The protein localises to the nuclear pore complex. It is found in the nucleus membrane. In terms of biological role, functions as a component of the nuclear pore complex (NPC). NPC components, collectively referred to as nucleoporins (NUPs), can play the role of both NPC structural components and of docking or interaction partners for transiently associated nuclear transport factors. Active directional transport is assured by both, a Phe-Gly (FG) repeat affinity gradient for these transport factors across the NPC and a transport cofactor concentration gradient across the nuclear envelope (GSP1 and GSP2 GTPases associated predominantly with GTP in the nucleus, with GDP in the cytoplasm). As one of the FG repeat nucleoporins NUP2 is involved in interactions with and guidance of nuclear transport receptors such as SRP1-KAP95 (importin alpha and beta) through the NPC. Like the closely related NUP1 it also plays an important role in disassembling and recycling SRP1-KAP95 to the cytoplasm after nuclear import. Upon entry of the heterotrimeric SRP1-KAP95-cargo complex in the nucleus, NUP2 binds through its N-terminus to the SRP1 nuclear localization signal (NLS) binding site, thus accelerating the release of the NLS-cargo. SRP1 in turn is released from NUP2 by binding of the GSP1-GTP associated export factor CSE1. NUP2 may also have a chromatin boundary/insulator activity through indirect interaction with genomic DNA via CSE1 and blocking of heterochromatin spreading. This Saccharomyces cerevisiae (strain ATCC 204508 / S288c) (Baker's yeast) protein is Nucleoporin NUP2 (NUP2).